The primary structure comprises 105 residues: U2-lycotoxin-Ls1a (105 aa).

A signal peptide spans 1–17; the sequence is MIKYVLISALLVVAVYS. A propeptide spanning residues 18–41 is cleaved from the precursor; sequence FTIEDNEDALLEEAEDELDTEEER. 4 cysteine pairs are disulfide-bonded: cysteine 51–cysteine 67, cysteine 58–cysteine 97, cysteine 60–cysteine 83, and cysteine 69–cysteine 81.

The protein belongs to the neurotoxin 04 (omega-agtx) family. 01 (type I omega-agtx) subfamily. In terms of tissue distribution, expressed by the venom gland.

It localises to the secreted. Its function is as follows. Insecticidal to house crickets. It induces an excitatory slow-onset impact that leads to irreversible spastic paralysis. It also modifies human voltage-gated potassium channel Kv1.5/KCNA5. Most likely, it binds to the voltage-sensing domain of the channel, suggesting it does not block the pore but prevents its opening at physiological membrane potentials. The recombinant peptide binds to the channel in an irreversible manner and slows down the hKv1.5 current activation kinetics. It is not toxic to mice, when intracranially injected (at 0.5 ug/g mouse). The chain is U2-lycotoxin-Ls1a from Lycosa singoriensis (Wolf spider).